We begin with the raw amino-acid sequence, 749 residues long: Disintegrin and metalloproteinase domain-containing protein 10 (749 aa).

Positions 1 to 18 (MVLPTVLILLLSWAAGLG) are cleaved as a signal peptide. A propeptide spanning residues 19–214 (GQYGNPLNKY…MGPELLRKKR (196 aa)) is cleaved from the precursor. Residues 171–178 (GGCADHSV) carry the Cysteine switch motif. Cysteine 173 serves as a coordination point for Zn(2+). The Extracellular portion of the chain corresponds to 215 to 673 (TTLAERNTCQ…SPQLYENIAE (459 aa)). Residues 221 to 457 (NTCQLYIQTD…KRNNCFVESG (237 aa)) form the Peptidase M12B domain. 17 cysteine pairs are disulfide-bonded: cysteine 223–cysteine 314, cysteine 345–cysteine 452, cysteine 400–cysteine 436, cysteine 461–cysteine 496, cysteine 472–cysteine 485, cysteine 474–cysteine 480, cysteine 484–cysteine 516, cysteine 504–cysteine 512, cysteine 511–cysteine 537, cysteine 525–cysteine 544, cysteine 531–cysteine 563, cysteine 556–cysteine 568, cysteine 573–cysteine 599, cysteine 581–cysteine 608, cysteine 583–cysteine 598, cysteine 595–cysteine 640, and cysteine 633–cysteine 646. 2 N-linked (GlcNAc...) asparagine glycosylation sites follow: asparagine 268 and asparagine 279. Histidine 384 lines the Zn(2+) pocket. Glutamate 385 is a catalytic residue. 2 residues coordinate Zn(2+): histidine 388 and histidine 394. A glycan (N-linked (GlcNAc...) asparagine) is linked at asparagine 440. The Disintegrin domain occupies 458–552 (QPICGNGMVE…LCPASDPKPN (95 aa)). A glycan (N-linked (GlcNAc...) asparagine) is linked at asparagine 552. Residues 674-697 (WIVAHWWAVLLMGIALIMLMAGFI) traverse the membrane as a helical segment. Residues 698 to 749 (KICSVHTPSSNPKLPPPKPLPGTLKRRRPPQPIQQPPRQRPRESYQMGHMRR) are Cytoplasmic-facing. The interval 705–749 (PSSNPKLPPPKPLPGTLKRRRPPQPIQQPPRQRPRESYQMGHMRR) is disordered. An SH3-binding motif is present at residues 709-716 (PKLPPPKP). Threonine 720 is modified (phosphothreonine). The short motif at 723-729 (RRRPPQP) is the SH3-binding element. The segment at 735 to 749 (RQRPRESYQMGHMRR) is interaction with AP2A1, AP2A2 and AP2M1.

Forms a ternary EFNA5-EPHA3-ADAM10 complex mediating EFNA5 extracellular domain shedding by ADAM10 which regulates the EFNA5-EPHA3 complex internalization and function, the cleavage occurs in trans, with ADAM10 and its substrate being on the membranes of opposing cells. Interacts with the clathrin adapter AP2 complex subunits AP2A1, AP2A2, AP2B1, and AP2M1; this interaction facilitates ADAM10 endocytosis from the plasma membrane during long-term potentiation in hippocampal neurons. Forms a ternary complex composed of ADAM10, EPHA4 and CADH1; within the complex, ADAM10 cleaves CADH1 which disrupts adherens junctions. Interacts with EPHA2. Interacts with NGF in a divalent cation-dependent manner. Interacts with TSPAN14; the interaction promotes ADAM10 maturation and cell surface expression. Interacts with TSPAN5, TSPAN10, TSPAN14, TSPAN15, TSPAN17 and TSPAN33; these interactions regulate ADAM10 substrate specificity, endocytosis and turnover. Interacts (via extracellular domain) with TSPAN33 (via extracellular domain) and (via cytoplasmic domain) with AFDN; interaction with TSPAN33 allows the docking of ADAM10 to zonula adherens through a PDZ11-dependent interaction between TSPAN33 and PLEKHA7 while interaction with AFDN locks ADAM10 at zonula adherens. Interacts with DLG1; this interaction recruits ADAM10 to the cell membrane during long-term depression in hippocampal neurons. Interacts (via extracellular domain) with BACE1 (via extracellular domain). Interacts with FAM171A1. Zn(2+) is required as a cofactor. In terms of processing, the precursor is cleaved by furin and PCSK7. In terms of tissue distribution, expressed in brain, kidney, lung, spleen, ovary and testis.

The protein localises to the cell membrane. It localises to the golgi apparatus membrane. It is found in the cytoplasmic vesicle. The protein resides in the clathrin-coated vesicle. Its subcellular location is the cell projection. The protein localises to the axon. It localises to the dendrite. It is found in the cell junction. The protein resides in the adherens junction. Its subcellular location is the cytoplasm. It catalyses the reaction Endopeptidase of broad specificity.. With respect to regulation, catalytically inactive when the propeptide is intact and associated with the mature enzyme. The disintegrin and cysteine-rich regions modulate access of substrates to exerts an inhibitory effect on the cleavage of ADAM10 substrates. In terms of biological role, transmembrane metalloprotease which mediates the ectodomain shedding of a myriad of transmembrane proteins, including adhesion proteins, growth factor precursors and cytokines being essential for development and tissue homeostasis. Associates with six members of the tetraspanin superfamily TspanC8 which regulate its exit from the endoplasmic reticulum and its substrate selectivity. Cleaves the membrane-bound precursor of TNF-alpha at '76-Ala-|-Val-77' to its mature soluble form. Responsible for the proteolytical release of soluble JAM3 from endothelial cells surface. Responsible for the proteolytic release of several other cell-surface proteins, including heparin-binding epidermal growth-like factor, ephrin-A2, CD44, CDH2 and for constitutive and regulated alpha-secretase cleavage of amyloid precursor protein (APP). Contributes to the normal cleavage of the cellular prion protein. Involved in the cleavage of the adhesion molecule L1 at the cell surface and in released membrane vesicles, suggesting a vesicle-based protease activity. Also controls the proteolytic processing of Notch and mediates lateral inhibition during neurogenesis. Required for the development of type 1 transitional B cells into marginal zone B cells, probably by cleaving Notch. Responsible for the FasL ectodomain shedding and for the generation of the remnant ADAM10-processed FasL (FasL APL) transmembrane form. Also cleaves the ectodomain of the integral membrane proteins CORIN and ITM2B. Mediates the proteolytic cleavage of LAG3, leading to release the secreted form of LAG3. Mediates the proteolytic cleavage of IL6R and IL11RA, leading to the release of secreted forms of IL6R and IL11RA. Enhances the cleavage of CHL1 by BACE1. Cleaves NRCAM. Cleaves TREM2, resulting in shedding of the TREM2 ectodomain. Involved in the development and maturation of glomerular and coronary vasculature. During development of the cochlear organ of Corti, promotes pillar cell separation by forming a ternary complex with CADH1 and EPHA4 and cleaving CADH1 at adherens junctions. May regulate the EFNA5-EPHA3 signaling. Regulates leukocyte transmigration as a sheddase for the adherens junction protein VE-cadherin/CDH5 in endothelial cells. The chain is Disintegrin and metalloproteinase domain-containing protein 10 (Adam10) from Rattus norvegicus (Rat).